Consider the following 141-residue polypeptide: Acetyltransferase YPN_1354 (141 aa).

Residues 1–141 (MEIRIFQQDD…GKRLIVDQEY (141 aa)) enclose the N-acetyltransferase domain.

Belongs to the acetyltransferase family. YpeA subfamily.

The sequence is that of Acetyltransferase YPN_1354 from Yersinia pestis bv. Antiqua (strain Nepal516).